The sequence spans 433 residues: MRMIDIIEKKRDGHTLTTEEINFFIDGYVKGDIPDYQASSLAMAIYFQDMNDDERAALTMAMVNSGDMIDLSDIKGVKVDKHSTGGVGDTTTLVLAPLVAAVDVPVAKMSGRGLGHTGGTIDKLEAIDGFHVEIDEATFVKLVNENKVAVVGQSGNLTPADKKLYALRDVTGTVNSIPLIASSIMSKKIAAGADAIVLDVKTGSGAFMKTLEDAEALAHAMVRIGNNVGRNTMAIISDMNQPLGRAIGNALELQEAIDTLKGQGPKDLTELVLTLGSQMVVLANKAETLEEARALLIEAINSGAALEKFKTFIKNQGGDETVIDHPERLPQAQYQIEYKAKKSGYVTELVSNDIGVASMMLGAGRLTKEDDIDLAVGIVLNKKIGDKVEEGESLLTIHSNRQDVDDVVKKLDSSITIADHVVSPTLIHKIIIE.

81–83 (KHS) serves as a coordination point for phosphate. G88 and T90 together coordinate K(+). Residues T92, 108 to 110 (KMS), and T120 contribute to the phosphate site. R168 and K187 together coordinate substrate. L243, A246, and E255 together coordinate K(+).

This sequence belongs to the thymidine/pyrimidine-nucleoside phosphorylase family. As to quaternary structure, homodimer. Requires K(+) as cofactor.

It catalyses the reaction uridine + phosphate = alpha-D-ribose 1-phosphate + uracil. The enzyme catalyses thymidine + phosphate = 2-deoxy-alpha-D-ribose 1-phosphate + thymine. It carries out the reaction 2'-deoxyuridine + phosphate = 2-deoxy-alpha-D-ribose 1-phosphate + uracil. Catalyzes phosphorolysis of the pyrimidine nucleosides uridine, thymidine and 2'-deoxyuridine with the formation of the corresponding pyrimidine base and ribose-1-phosphate. The chain is Pyrimidine-nucleoside phosphorylase (pdp) from Staphylococcus aureus (strain MSSA476).